A 241-amino-acid chain; its full sequence is Glucosamine-6-phosphate deaminase (241 aa).

The active-site Proton acceptor; for enolization step is aspartate 67. The active-site For ring-opening step is asparagine 136. Catalysis depends on histidine 138, which acts as the Proton acceptor; for ring-opening step. Glutamate 143 functions as the For ring-opening step in the catalytic mechanism.

Belongs to the glucosamine/galactosamine-6-phosphate isomerase family. NagB subfamily.

It catalyses the reaction alpha-D-glucosamine 6-phosphate + H2O = beta-D-fructose 6-phosphate + NH4(+). The protein operates within amino-sugar metabolism; N-acetylneuraminate degradation; D-fructose 6-phosphate from N-acetylneuraminate: step 5/5. Catalyzes the reversible isomerization-deamination of glucosamine 6-phosphate (GlcN6P) to form fructose 6-phosphate (Fru6P) and ammonium ion. This Bacillus velezensis (strain DSM 23117 / BGSC 10A6 / LMG 26770 / FZB42) (Bacillus amyloliquefaciens subsp. plantarum) protein is Glucosamine-6-phosphate deaminase.